Here is a 594-residue protein sequence, read N- to C-terminus: MSRLEARTRYLQAGQKRLGKIRKRGFFMETAATKNYLALSFGCLSPTRGEEYLLDQIKKKHDLWNKLVEKDREHREKVRQVMVFESETTKKIKELEEELNSLREEIKNQRKTKRTGKVDLTDQKARIEEIKPQLKQLKEKFKEERSFIFEARKQELAQLEKERWAVVKELGKGSGLYWCNLEDVVNSYDIGRKKAKAAGGEMRFHRWDGTGKVTVRFQKGLPVNEMFSCTNNLLQIDPVDKDAWYNPVRAIRRKKSRTRVRLRACSENKKPLFIELPVVLHREIPEDALIRTASVIREKVGMRYRYKLNLVLEILGENTNRILPALEGTAAIDLGWRTVKDGLRVACLVDDKGHSEELILDNDVLHEFNKIKDLQSIRDNLFNETKAKLMELLKTLELPDEAKERTSHMANWRSQQKMLRLHQYWRENRLPGDDEVWEVLEYWRKREIHLYEWQENLRDQVLRRRKEIYRIFAAKITRKYKTIVLEEFTLNKTVQKPNPEEGPAGTLPANRNRFIAAISEFRNELANACRKNHVEFTYVPAENTTITCHKCGHKEKFDAAAQIIHTCSTCGELWDQDYNAAKNLLAFSQKGGVK.

Positions 1-85 (MSRLEARTRY…EKVRQVMVFE (85 aa)) are recognition domain (REC1-N). The recognition domain (REC2) stretch occupies residues 86 to 153 (SETTKKIKEL…ERSFIFEARK (68 aa)). The interval 154 to 211 (QELAQLEKERWAVVKELGKGSGLYWCNLEDVVNSYDIGRKKAKAAGGEMRFHRWDGTG) is recognition domain (REC1-C). Residues 212 to 314 (KVTVRFQKGL…RYKLNLVLEI (103 aa)) are wedge domain (WED). The interval 315-329 (LGENTNRILPALEGT) is linker. The tract at residues 330-540 (AAIDLGWRTV…KNHVEFTYVP (211 aa)) is ruvC-I. Residues 541-575 (AENTTITCHKCGHKEKFDAAAQIIHTCSTCGELWD) form a target nucleic-acid binding (TNB) region. Residues Cys548, Cys551, Cys567, and Cys570 each contribute to the Zn(2+) site. The tract at residues 576 to 594 (QDYNAAKNLLAFSQKGGVK) is ruvC-II. Asp577 is a binding site for Mg(2+).

This sequence belongs to the CRISPR-associated DNA-binding protein Cas12m family. Requires Mg(2+) as cofactor. The cofactor is Zn(2+).

CRISPR (clustered regularly interspaced short palindromic repeat), is an adaptive immune system that provides protection against mobile genetic elements (viruses, transposable elements and conjugative plasmids). CRISPR clusters contain sequences complementary to antecedent mobile elements and target invading nucleic acids. CRISPR clusters are transcribed and processed into CRISPR RNA (crRNA). Recognizes a short motif in the CRISPR repeat sequences (the 5' PAM or protospacer adjacent motif, 5'-C/TCN-3' in this organism) to help distinguish self versus nonself, as targets within the bacterial CRISPR locus do not have PAMs. Upon expression in E.coli as a CRISPR locus inhibits plasmid propagation when targeted to regions essential for plasmid propagation (replication origin but not a selectable marker), probably by inhibiting transcription. Cas12m-crRNA binds DNA in a PAM-dependent, crRNA-guided fashion. Upon expression in E.coli as a CRISPR region preferentially binds to its associated crRNA. Probably required for pre-crRNA processing to mature crRNA. The polypeptide is CRISPR-associated DNA-binding protein Cas12m (Thermanaerosceptrum fracticalcis).